Here is a 157-residue protein sequence, read N- to C-terminus: 2-C-methyl-D-erythritol 2,4-cyclodiphosphate synthase (157 aa).

Asp8 and His10 together coordinate a divalent metal cation. Residues 8–10 (DVH) and 34–35 (HS) each bind 4-CDP-2-C-methyl-D-erythritol 2-phosphate. His42 is an a divalent metal cation binding site. Residues 56-58 (DIG), 61-65 (FPDTD), 100-106 (AQAPKMA), 132-135 (TTTE), Phe139, and Arg142 contribute to the 4-CDP-2-C-methyl-D-erythritol 2-phosphate site.

The protein belongs to the IspF family. Homotrimer. The cofactor is a divalent metal cation.

The enzyme catalyses 4-CDP-2-C-methyl-D-erythritol 2-phosphate = 2-C-methyl-D-erythritol 2,4-cyclic diphosphate + CMP. The protein operates within isoprenoid biosynthesis; isopentenyl diphosphate biosynthesis via DXP pathway; isopentenyl diphosphate from 1-deoxy-D-xylulose 5-phosphate: step 4/6. Functionally, involved in the biosynthesis of isopentenyl diphosphate (IPP) and dimethylallyl diphosphate (DMAPP), two major building blocks of isoprenoid compounds. Catalyzes the conversion of 4-diphosphocytidyl-2-C-methyl-D-erythritol 2-phosphate (CDP-ME2P) to 2-C-methyl-D-erythritol 2,4-cyclodiphosphate (ME-CPP) with a corresponding release of cytidine 5-monophosphate (CMP). The sequence is that of 2-C-methyl-D-erythritol 2,4-cyclodiphosphate synthase from Pseudomonas putida (strain GB-1).